Consider the following 349-residue polypeptide: Quinone oxidoreductase-like protein 2 (349 aa).

Lysine 35 is modified (N6-acetyllysine). Lysine 200 is subject to N6-succinyllysine.

This sequence belongs to the zinc-containing alcohol dehydrogenase family. Quinone oxidoreductase subfamily.

The protein is Quinone oxidoreductase-like protein 2 of Bos taurus (Bovine).